The following is a 103-amino-acid chain: Alkanal monooxygenase alpha chain (103 aa).

In terms of assembly, heterodimer of an alpha and a beta chain.

The catalysed reaction is a long-chain fatty aldehyde + FMNH2 + O2 = a long-chain fatty acid + hnu + FMN + H2O + 2 H(+). Light-emitting reaction in luminous bacteria. The polypeptide is Alkanal monooxygenase alpha chain (luxA) (Vibrio cholerae).